We begin with the raw amino-acid sequence, 275 residues long: Spermidine/putrescine transport system permease protein PotB (275 aa).

A helical transmembrane segment spans residues 1–21 (MIVTIVGWLVLFVFLPNLMII). The Periplasmic segment spans residues 22-60 (GTSFLTRDDASFVKMVFTLDNYTRLLDPLYFEVLLHSLN). The ABC transmembrane type-1 domain maps to 55-261 (LLHSLNMALI…IVMGLMLLVY (207 aa)). Residues 61–81 (MALIATLACLVLGYPFAWFLA) traverse the membrane as a helical segment. The Cytoplasmic segment spans residues 82–89 (KLPHKVRP). The chain crosses the membrane as a helical span at residues 90–110 (LLLFLLIVPFWTNSLIRIYGL). The Periplasmic segment spans residues 111–135 (KIFLSTKGYLNEFLLWLGVIDTPIR). Residues 136-156 (IMFTPSAVIIGLVYILLPFMV) form a helical membrane-spanning segment. Residues 157 to 187 (MPLYSSIEKLDKPLLEAARDLGASKLQTFIR) lie on the Cytoplasmic side of the membrane. A helical membrane pass occupies residues 188–208 (IIIPLTMPGIIAGCLLVMLPA). The Periplasmic segment spans residues 209-241 (MGLFYVSDLMGGAKNLLIGNVIKVQFLNIRDWP). The chain crosses the membrane as a helical span at residues 242–262 (FGAATSITLTIVMGLMLLVYW). Over 263-275 (RASRLLNKKVELE) the chain is Cytoplasmic.

This sequence belongs to the binding-protein-dependent transport system permease family. CysTW subfamily.

It localises to the cell inner membrane. Its function is as follows. Required for the activity of the bacterial periplasmic transport system of putrescine and spermidine. The chain is Spermidine/putrescine transport system permease protein PotB (potB) from Escherichia coli (strain K12).